A 250-amino-acid chain; its full sequence is Testis-expressed protein 101 (250 aa).

An N-terminal signal peptide occupies residues 1–25; it reads MGACRIQYVLLIFLLIASRWTLVQN. N-linked (GlcNAc...) asparagine glycans are attached at residues N45, N110, N134, and N160. The 75-residue stretch at 141–215 folds into the UPAR/Ly6 domain; sequence CPTCVALGSC…VKETCSYQSF (75 aa). G224 is lipidated: GPI-anchor amidated glycine. Residues 225–250 constitute a propeptide, removed in mature form; the sequence is ASQMPTSLWVLELLFPLLLLPLTHFP.

In terms of assembly, interacts with VAMP3. Interacts with LY6K. Interacts with DPEP3; co-localized on the cell surface of spermatocytes, spermatids, and testicular spermatozoa, co-localized only in cytoplasmic droplets of caput and corpus epididymal sperm. Interacts with ADAM3; co-localized on sperm surface. Interacts with ADAM5. Post-translationally, N-glycosylated; by high mannose and/or biantennary complex and/or certain types of hybrid oligosaccharides; possesses different oligosaccharides chains according to its subcellular localization in the testis. In terms of processing, sheds from membrane raft by ACE and released from the cell surface of epididymal sperm while it passes through the caput epididymis leading to disappearance of TEX101 on spermatozoa; is essential to produce fertile spermatozoa. In terms of tissue distribution, detected in testis and ovary. Expressed in spermatocytes, spermatids and testicular spermatozoa, but not in spermatogonia or interstitial cells. Expressed abundantly in testicular germ cells (TGCs) but mostly disappeared from epididymal spermatozoa.

The protein localises to the cell membrane. It localises to the membrane raft. The protein resides in the cytoplasmic vesicle. Its subcellular location is the secretory vesicle. It is found in the acrosome. The protein localises to the secreted. In terms of biological role, plays a role in fertilization by controlling binding of sperm to zona pellucida and migration of spermatozoa into the oviduct probably through molecule adhesion ADAM3. May play a role in signal transduction and promote protein tyrosine phosphorylation. This Mus musculus (Mouse) protein is Testis-expressed protein 101.